The primary structure comprises 551 residues: uncharacterized protein (551 aa).

Disordered stretches follow at residues 66-111 (GNNK…STNL), 130-165 (PEAT…EKSN), 180-229 (AFNP…LSNL), and 277-303 (AFTS…VPLS). Ser74 carries the phosphoserine modification. 2 stretches are compositionally biased toward polar residues: residues 92 to 111 (GFSN…STNL) and 143 to 156 (VVNT…GTQE). Over residues 182–193 (NPSSVLPSNSSS) the composition is skewed to low complexity. Residues 204 to 226 (KETYQPNTFRRSPLKNDTGSVEL) show a composition bias toward polar residues. Over residues 290 to 299 (TRPSSTRFPS) the composition is skewed to low complexity.

This is an uncharacterized protein from Schizosaccharomyces pombe (strain 972 / ATCC 24843) (Fission yeast).